The sequence spans 630 residues: MRKWRIEDSEELYNITGWGTSYFGINDKGHVVVTPRKDGVEVDLKELVDELQLRDVAAPMLVRFPDILDNRIEKIANCFKQASDEYGYKAQNFIIYPIKVNQMRPVVEEIISHGKKFNLGLEAGSKPELHAVIAVNTDSDSLIICNGYKDESYIELALLAQKMGKRIFLVVEKMNELRLIAKMAKQLNVRPNIGIRIKLASSGSGKWEDSGGDASKFGLTSSELLEALDFLEKKDMKDCLKLIHFHIGSQVTKIRRIKTALREASQFYVQLHVMGFNVEFVDIGGGLGVDYDGTRSANSESSVNYSIQEYVNDSISTLVDASDKNGIPHPNIITESGRSLTAHHSVLIFEVLETATLPEMDEDFEVGENDHELVHELYEIWDNLNQSRMVEAWHDAQQIREEALDLFSHGIVDLKTRAQIERLYWSVTREINQIASGLKHAPDEFRKLDKLLADKYFCNFSLFQSLPDSWAIDQIFPIMPIQRLDEKPDRNATLQDITCDSDGKIANFISTRYVSHDLPVHSLKGKDAYYIGVFLVGAYQEILGDMHNLFGDTNAVHVTVDDKGYSIDQVIDGETVAEVLDYVQYNPKKLVRTLETWVTKSVKEGRISVEEGKEFLSNYRSGLYGYTYLE.

Lysine 99 bears the N6-(pyridoxal phosphate)lysine mark. Residue valine 281–tyrosine 291 coordinates substrate.

The protein belongs to the Orn/Lys/Arg decarboxylase class-II family. SpeA subfamily. Mg(2+) serves as cofactor. The cofactor is pyridoxal 5'-phosphate.

The enzyme catalyses L-arginine + H(+) = agmatine + CO2. It functions in the pathway amine and polyamine biosynthesis; agmatine biosynthesis; agmatine from L-arginine: step 1/1. Functionally, catalyzes the biosynthesis of agmatine from arginine. The sequence is that of Biosynthetic arginine decarboxylase from Phocaeicola vulgatus (strain ATCC 8482 / DSM 1447 / JCM 5826 / CCUG 4940 / NBRC 14291 / NCTC 11154) (Bacteroides vulgatus).